The primary structure comprises 501 residues: MPFSADSVTSLRQLADALAARTVSAEELAREYLARIEQAAALNAFIHVDAELTLAQARAADERRARGEAAPLTGVPVAHKDVFVTRGWRATAGSKMLGNYESPFDATVVERMAAAGMVTLGKTNMDEFAMGSSNENSHFGPVRNPWDAGRVPGGSSGGSAAAVAAGLAPAATGTDTGGSIRQPASFSGITGIKPTYGRVSRYGMIAFASSLDQGGPMAHTAEDCALLLNAMAGFDPKDSTSIPPAQGGVDEDYTRLLGQPRAGATAERPLAGLRIGLPREYFGKGLSADVEQAVRAALAEYEKLGATLVEVSLPKTELSIPVYYVIAPAEASSNLSRFDGVRYGHRAAEYRDLLDMYKKTRAEGFGAEVKRRILVGTYVLSHGYYDAYYLQAQKIRRIIADDFQRAFAQCDVIMGPVAPTVAWKLGEKTSDPVQMYLADIFTLSTSLAGLPGMSVPCGFGEGNMPVGLQLIGNYFDEARLLQAAHAFQQATDWHLRRPAKA.

Residues Lys-80 and Ser-155 each act as charge relay system in the active site. The active-site Acyl-ester intermediate is Ser-179.

It belongs to the amidase family. GatA subfamily. Heterotrimer of A, B and C subunits.

It catalyses the reaction L-glutamyl-tRNA(Gln) + L-glutamine + ATP + H2O = L-glutaminyl-tRNA(Gln) + L-glutamate + ADP + phosphate + H(+). In terms of biological role, allows the formation of correctly charged Gln-tRNA(Gln) through the transamidation of misacylated Glu-tRNA(Gln) in organisms which lack glutaminyl-tRNA synthetase. The reaction takes place in the presence of glutamine and ATP through an activated gamma-phospho-Glu-tRNA(Gln). The chain is Glutamyl-tRNA(Gln) amidotransferase subunit A from Cupriavidus taiwanensis (strain DSM 17343 / BCRC 17206 / CCUG 44338 / CIP 107171 / LMG 19424 / R1) (Ralstonia taiwanensis (strain LMG 19424)).